The following is a 536-amino-acid chain: MRRRGGDSFRRAGRRKISNVVWWVLSGIALLLFFLILSKAGHIEPRPSIPKRRYRNDKFVEGMNMTEEMLSPTSVARQVNDQIALAKAFVVIAKESKNLQFAWDLSAQIRNSQLLLSSAATRRSPLTVLESESTIRDMAVLLYQAQQLHYDSATMIMRLKASIQALEEQMSSVSEKSSKYGQIAAEEVPKSLYCLGVRLTTEWFQNLDLQRTLKERSRVDSKLTDNSLYHFCVFSDNIIATSVVVNSTALNSKAPEKVVFHLVTNEINYAAMKAWFAINMDNLRGVTVEVQKFEDFSWLNASYVPVLKQLQDSDTQSYYFSGHNDDGRTPIKFRNPKYLSMLNHLRFYIPEVFPALKKVVFLDDDVVVQKDLSSLFSIDLNKNVNGAVETCMETFHRYHKYLNYSHPLIRSHFDPDACGWAFGMNVFDLVEWRKRNVTGIYHYWQEKNVDRTLWKLGTLPPGLLTFYGLTEALEASWHILGLGYTNVDARVIEKGAVLHFNGNLKPWLKIGIEKYKPLWERYVDYTSPFMQQCNFH.

At 1–16 (MRRRGGDSFRRAGRRK) the chain is on the cytoplasmic side. Residues 17-37 (ISNVVWWVLSGIALLLFFLIL) form a helical; Signal-anchor for type II membrane protein membrane-spanning segment. The Lumenal segment spans residues 38-536 (SKAGHIEPRP…SPFMQQCNFH (499 aa)). Asparagine 64, asparagine 246, asparagine 300, asparagine 403, and asparagine 436 each carry an N-linked (GlcNAc...) asparagine glycan.

Belongs to the glycosyltransferase 8 family. As to expression, expressed in roots, inflorescences, siliques, leaves and stems.

It is found in the golgi apparatus membrane. The protein operates within glycan metabolism; pectin biosynthesis. In terms of biological role, may be involved in pectin and/or xylans biosynthesis in cell walls. This Arabidopsis thaliana (Mouse-ear cress) protein is Probable galacturonosyltransferase 10 (GAUT10).